The primary structure comprises 172 residues: Shikimate kinase (172 aa).

Residue 11 to 16 participates in ATP binding; the sequence is GAGKST. S15 lines the Mg(2+) pocket. Residues D33, R57, and G79 each contribute to the substrate site. An ATP-binding site is contributed by R117. R136 is a substrate binding site. ATP is bound at residue R153.

The protein belongs to the shikimate kinase family. As to quaternary structure, monomer. The cofactor is Mg(2+).

Its subcellular location is the cytoplasm. The enzyme catalyses shikimate + ATP = 3-phosphoshikimate + ADP + H(+). The protein operates within metabolic intermediate biosynthesis; chorismate biosynthesis; chorismate from D-erythrose 4-phosphate and phosphoenolpyruvate: step 5/7. Its function is as follows. Catalyzes the specific phosphorylation of the 3-hydroxyl group of shikimic acid using ATP as a cosubstrate. This Pseudomonas syringae pv. tomato (strain ATCC BAA-871 / DC3000) protein is Shikimate kinase.